The following is a 712-amino-acid chain: Polyribonucleotide nucleotidyltransferase (712 aa).

Mg(2+)-binding residues include Asp-487 and Asp-493. The KH domain occupies Pro-554–Ile-613. The S1 motif domain maps to Gly-623 to Lys-691.

It belongs to the polyribonucleotide nucleotidyltransferase family. Mg(2+) serves as cofactor.

It localises to the cytoplasm. The catalysed reaction is RNA(n+1) + phosphate = RNA(n) + a ribonucleoside 5'-diphosphate. Functionally, involved in mRNA degradation. Catalyzes the phosphorolysis of single-stranded polyribonucleotides processively in the 3'- to 5'-direction. In Bacillus cereus (strain ATCC 14579 / DSM 31 / CCUG 7414 / JCM 2152 / NBRC 15305 / NCIMB 9373 / NCTC 2599 / NRRL B-3711), this protein is Polyribonucleotide nucleotidyltransferase.